A 993-amino-acid polypeptide reads, in one-letter code: Vacuolar membrane protease (993 aa).

The Cytoplasmic portion of the chain corresponds to 1–24; sequence MSPAMANPRVRKFNPIAFTPLPVT. Residues 25–45 traverse the membrane as a helical segment; sequence LITTIVYLAVLILVLVTYLVV. Residues 46–391 are Vacuolar-facing; sequence PPAPTLEMSP…SAFAVFRLHT (346 aa). N-linked (GlcNAc...) asparagine glycans are attached at residues Asn-59, Asn-116, and Asn-119. Residues His-175 and Asp-187 each coordinate Zn(2+). Residue Glu-221 is the Proton acceptor of the active site. Residue Glu-222 participates in Zn(2+) binding. Asn-238 is a glycosylation site (N-linked (GlcNAc...) asparagine). Zn(2+) contacts are provided by Glu-247 and His-320. A helical membrane pass occupies residues 392–412; the sequence is LFALSVTLLVSAPLVLFITSI. Over 413–447 the chain is Cytoplasmic; that stretch reads ALSKTDRMYLFSMSKSLGGTSETVSLRGLRGLFRT. The chain crosses the membrane as a helical span at residues 448–468; sequence PIILTVTTVITIGLAYLLEKI. Residues 469–475 lie on the Vacuolar side of the membrane; sequence NPYIVHS. The chain crosses the membrane as a helical span at residues 476-496; the sequence is SQFAVWSMMLSVWIFVAWFLA. Residues 497-509 are Cytoplasmic-facing; the sequence is RVADFFRPSALHR. A helical membrane pass occupies residues 510-530; it reads AYSYTWIFIATWIMLVISTVY. The Vacuolar segment spans residues 531 to 534; it reads ANQK. Residues 535–555 form a helical membrane-spanning segment; the sequence is GIAAGYFIFFYFAAVFLATWV. Over 556–672 the chain is Cytoplasmic; sequence SYLELFSLPR…WSWTLPRWTW (117 aa). Residues 579 to 621 form a disordered region; that stretch reads RRSSSLSSRLLTPSADELPSDIGPNGAENLGDPDETDPTESTS. A helical membrane pass occupies residues 673–693; sequence ILQLLLLAPIVIILVGQVGLL. Topologically, residues 694–709 are vacuolar; that stretch reads LTTAMSQIGSDGVSTF. The chain crosses the membrane as a helical span at residues 710–730; that stretch reads IVYLACALLSTLLFAPLFPFI. Residues 731–737 are Cytoplasmic-facing; that stretch reads HRFTYHV. The helical transmembrane segment at 738–758 threads the bilayer; the sequence is PTFLLLIFIGTLIYNLVAFPF. Residues 759-993 are Vacuolar-facing; sequence SPANRLKIFF…VEASHDFIIQ (235 aa). N-linked (GlcNAc...) asparagine glycosylation is found at Asn-806, Asn-847, and Asn-955.

The protein belongs to the peptidase M28 family. It depends on Zn(2+) as a cofactor.

It is found in the vacuole membrane. Its function is as follows. May be involved in vacuolar sorting and osmoregulation. The chain is Vacuolar membrane protease from Paracoccidioides lutzii (strain ATCC MYA-826 / Pb01) (Paracoccidioides brasiliensis).